The primary structure comprises 263 residues: Heat-labile enterotoxin IIB, A chain (263 aa).

A signal peptide spans 1 to 20 (MAKVISFFISLFLISFPLYA). 26-39 (ADSRTPDEVRRSGG) contributes to the NAD(+) binding site. Glu130 is a catalytic residue. Cys205 and Cys217 form a disulfide bridge.

This sequence belongs to the enterotoxin A family. Heterohexamer of one A chain and of five B chains.

In terms of biological role, the biological activity of the toxin is produced by the A chain, which activates intracellular adenyl cyclase. This is Heat-labile enterotoxin IIB, A chain from Escherichia coli.